The primary structure comprises 163 residues: Succinate dehydrogenase assembly factor 2-B, mitochondrial (163 aa).

A mitochondrion-targeting transit peptide spans 1–23 (MFRQLRLTMDISGWIFMPWRRSL).

The protein belongs to the SDHAF2 family. Interacts with the flavoprotein subunit within the SDH catalytic dimer.

It is found in the mitochondrion matrix. Functionally, plays an essential role in the assembly of succinate dehydrogenase (SDH), an enzyme complex (also referred to as respiratory complex II) that is a component of both the tricarboxylic acid (TCA) cycle and the mitochondrial electron transport chain, and which couples the oxidation of succinate to fumarate with the reduction of ubiquinone (coenzyme Q) to ubiquinol. Required for flavinylation (covalent attachment of FAD) of the flavoprotein subunit of the SDH catalytic dimer. The protein is Succinate dehydrogenase assembly factor 2-B, mitochondrial of Drosophila ananassae (Fruit fly).